Consider the following 204-residue polypeptide: UPF0301 protein Mflv_0850 (204 aa).

The protein belongs to the UPF0301 (AlgH) family.

This is UPF0301 protein Mflv_0850 from Mycolicibacterium gilvum (strain PYR-GCK) (Mycobacterium gilvum (strain PYR-GCK)).